The primary structure comprises 340 residues: Annexin A2-A (340 aa).

A P10 binding site region spans residues 2–25 (ALIHEILGKLSLEGNQSCARQSAL). 4 Annexin repeats span residues 34–105 (FDAE…GLIK), 106–177 (TRPQ…ALAK), 190–262 (EKID…NLVQ), and 266–337 (NKPL…NLCG).

This sequence belongs to the annexin family. Tetramer of 2 light chains (p10 proteins) and 2 heavy chains (p36 proteins).

The protein localises to the secreted. It localises to the extracellular space. The protein resides in the extracellular matrix. It is found in the basement membrane. Calcium-regulated membrane-binding protein whose affinity for calcium is greatly enhanced by anionic phospholipids. It binds two calcium ions with high affinity. This chain is Annexin A2-A (anxa2-a), found in Xenopus laevis (African clawed frog).